The primary structure comprises 157 residues: Peptide methionine sulfoxide reductase MsrA (157 aa).

The active site involves C10.

The protein belongs to the MsrA Met sulfoxide reductase family.

The catalysed reaction is L-methionyl-[protein] + [thioredoxin]-disulfide + H2O = L-methionyl-(S)-S-oxide-[protein] + [thioredoxin]-dithiol. It catalyses the reaction [thioredoxin]-disulfide + L-methionine + H2O = L-methionine (S)-S-oxide + [thioredoxin]-dithiol. Functionally, has an important function as a repair enzyme for proteins that have been inactivated by oxidation. Catalyzes the reversible oxidation-reduction of methionine sulfoxide in proteins to methionine. This is Peptide methionine sulfoxide reductase MsrA from Clostridium perfringens (strain ATCC 13124 / DSM 756 / JCM 1290 / NCIMB 6125 / NCTC 8237 / Type A).